A 239-amino-acid polypeptide reads, in one-letter code: Ribonuclease HII (239 aa).

The 214-residue stretch at 18–231 folds into the RNase H type-2 domain; sequence KIIVGLDEAG…SKNLLKEIEE (214 aa). The a divalent metal cation site is built by aspartate 24, glutamate 25, and aspartate 125.

This sequence belongs to the RNase HII family. Requires Mn(2+) as cofactor. Mg(2+) serves as cofactor.

Its subcellular location is the cytoplasm. The catalysed reaction is Endonucleolytic cleavage to 5'-phosphomonoester.. In terms of biological role, endonuclease that specifically degrades the RNA of RNA-DNA hybrids. The chain is Ribonuclease HII from Methanococcus maripaludis (strain C7 / ATCC BAA-1331).